The following is a 1067-amino-acid chain: Isoleucine--tRNA ligase (1067 aa).

The 'HIGH' region motif lies at 49–59 (PYVSGAIHLGT). Positions 625-629 (KMSKS) match the 'KMSKS' region motif. Lysine 628 is a binding site for ATP.

It belongs to the class-I aminoacyl-tRNA synthetase family. IleS type 2 subfamily. Monomer. The cofactor is Zn(2+).

The protein resides in the cytoplasm. The catalysed reaction is tRNA(Ile) + L-isoleucine + ATP = L-isoleucyl-tRNA(Ile) + AMP + diphosphate. In terms of biological role, catalyzes the attachment of isoleucine to tRNA(Ile). As IleRS can inadvertently accommodate and process structurally similar amino acids such as valine, to avoid such errors it has two additional distinct tRNA(Ile)-dependent editing activities. One activity is designated as 'pretransfer' editing and involves the hydrolysis of activated Val-AMP. The other activity is designated 'posttransfer' editing and involves deacylation of mischarged Val-tRNA(Ile). In Pyrococcus abyssi (strain GE5 / Orsay), this protein is Isoleucine--tRNA ligase.